A 633-amino-acid polypeptide reads, in one-letter code: Molybdenum cofactor biosynthesis protein 1 (633 aa).

The segment at 1–380 (MAAQPVSRVV…QMKNRPMILI (380 aa)) is molybdenum cofactor biosynthesis protein A. Position 61 is a phosphoserine (S61). In terms of domain architecture, Radical SAM core spans 61–295 (SFGRHHSYLR…AKAFKIPGFR (235 aa)). Position 70 (R70) interacts with GTP. Residues C77 and C81 each coordinate [4Fe-4S] cluster. Y83 is an S-adenosyl-L-methionine binding site. C84 contacts [4Fe-4S] cluster. Residue R120 participates in GTP binding. Position 124 (G124) interacts with S-adenosyl-L-methionine. T151 contributes to the GTP binding site. Residue S175 coordinates S-adenosyl-L-methionine. Residue K195 is modified to N6-acetyllysine. K212 lines the GTP pocket. M246 serves as a coordination point for S-adenosyl-L-methionine. [4Fe-4S] cluster is bound by residues C309 and C312. GTP is bound at residue 314-316 (RLR). C326 contributes to the [4Fe-4S] cluster binding site. The interval 410 to 633 (VSFSSQMVTL…GGQRGDFHRT (224 aa)) is molybdenum cofactor biosynthesis protein C. Residues 446-480 (SSHLDSDANPKCLSPTEPQAPAASSGPLPDSDQLT) form a disordered region. K525 is subject to N6-acetyllysine. The active-site For molybdenum cofactor biosynthesis protein C activity is the D603.

In the C-terminal section; belongs to the MoaC family. The protein in the N-terminal section; belongs to the radical SAM superfamily. MoaA family. In terms of assembly, isoform MOCS1A and isoform MOCS1B probably form a heterooligomer. Requires [4Fe-4S] cluster as cofactor.

It carries out the reaction GTP + AH2 + S-adenosyl-L-methionine = (8S)-3',8-cyclo-7,8-dihydroguanosine 5'-triphosphate + 5'-deoxyadenosine + L-methionine + A + H(+). It catalyses the reaction (8S)-3',8-cyclo-7,8-dihydroguanosine 5'-triphosphate = cyclic pyranopterin phosphate + diphosphate. It functions in the pathway cofactor biosynthesis; molybdopterin biosynthesis. Isoform MOCS1A and isoform MOCS1B probably form a complex that catalyzes the conversion of 5'-GTP to cyclic pyranopterin monophosphate (cPMP). MOCS1A catalyzes the cyclization of GTP to (8S)-3',8-cyclo-7,8-dihydroguanosine 5'-triphosphate and MOCS1B catalyzes the subsequent conversion of (8S)-3',8-cyclo-7,8-dihydroguanosine 5'-triphosphate to cPMP. This Bos taurus (Bovine) protein is Molybdenum cofactor biosynthesis protein 1 (MOCS1).